Here is a 175-residue protein sequence, read N- to C-terminus: Epididymal-specific lipocalin-8 (175 aa).

A signal peptide spans 1–22 (MEARLLSNVCGFFLVFLLQAES). Asn66 and Asn74 each carry an N-linked (GlcNAc...) asparagine glycan. The cysteines at positions 79 and 166 are disulfide-linked.

This sequence belongs to the calycin superfamily. Lipocalin family. In terms of tissue distribution, predominantly expressed in epididymis.

Its subcellular location is the secreted. May play a role in male fertility. May act as a retinoid carrier protein within the epididymis. The polypeptide is Epididymal-specific lipocalin-8 (Lcn8) (Mus musculus (Mouse)).